The following is a 256-amino-acid chain: Ribosomal RNA small subunit methyltransferase J (256 aa).

S-adenosyl-L-methionine is bound by residues 104–105 (RD), 120–121 (ER), 156–157 (SS), and Asp-174.

The protein belongs to the methyltransferase superfamily. RsmJ family.

Its subcellular location is the cytoplasm. The catalysed reaction is guanosine(1516) in 16S rRNA + S-adenosyl-L-methionine = N(2)-methylguanosine(1516) in 16S rRNA + S-adenosyl-L-homocysteine + H(+). Its function is as follows. Specifically methylates the guanosine in position 1516 of 16S rRNA. The chain is Ribosomal RNA small subunit methyltransferase J from Yersinia pseudotuberculosis serotype O:1b (strain IP 31758).